The chain runs to 645 residues: MEQINIQFPDGNKKAFDKGTTTEDIAQSISPGLRKKAVAGKFNGQLVDLTKPLETDGSIEIVTPVSEEALEVLRHSTAHLMAHAIKRLYGNVKFGVGPVIEGGFYYDFDIDQNISSDDFEQIEKTMKQIVNENMKIERKVVSRDEAKELFSNDEYKLELIDAIPEDENVTLYSQGDFTDLCRGVHVPSTAKIKEFKLLSTAGAYWRGDSNNKMLQRIYGTAFFDKKELKAHLQMLEERKERDHRKIGKELELFTNSQLVGAGLPLWLPNGATIRREIERYIVDKEVSMGYDHVYTPVLANVDLYKTSGHWDHYQEDMFPPMQLDETESMVLRPMNCPHHMMIYANKPHSYRELPIRIAELGTMHRYEASGAVSGLQRVRGMTLNDSHIFVRPDQIKEEFKRVVNMIIDVYKDFGFEDYSFRLSYRDPEDKEKYFDDDDMWNKAENMLKEAADELGLSYEEAIGEAAFYGPKLDVQVKTAMGKEETLSTAQLDFLLPERFDLTYIGQDGEHHRPVVIHRGVVSTMERFVAFLTEETKGAFPTWLAPKQVQIIPVNVDLHYDYARQLQDELKSQGVRVSIDDRNEKMGYKIREAQMQKTPYQIVVGDKEVENNQVNVRQYGSQDQETVEKDEFIWNLVDEIRLKKHR.

Residues 1–63 (MEQINIQFPD…ETDGSIEIVT (63 aa)) enclose the TGS domain. Positions 242 to 540 (DHRKIGKELE…LTEETKGAFP (299 aa)) are catalytic. Cysteine 336, histidine 387, and histidine 517 together coordinate Zn(2+).

It belongs to the class-II aminoacyl-tRNA synthetase family. Homodimer. The cofactor is Zn(2+).

It localises to the cytoplasm. It catalyses the reaction tRNA(Thr) + L-threonine + ATP = L-threonyl-tRNA(Thr) + AMP + diphosphate + H(+). Functionally, catalyzes the attachment of threonine to tRNA(Thr) in a two-step reaction: L-threonine is first activated by ATP to form Thr-AMP and then transferred to the acceptor end of tRNA(Thr). Also edits incorrectly charged L-seryl-tRNA(Thr). This chain is Threonine--tRNA ligase, found in Staphylococcus aureus (strain bovine RF122 / ET3-1).